We begin with the raw amino-acid sequence, 431 residues long: Argininosuccinate lyase (431 aa).

The protein belongs to the lyase 1 family. Argininosuccinate lyase subfamily.

The protein resides in the cytoplasm. It carries out the reaction 2-(N(omega)-L-arginino)succinate = fumarate + L-arginine. It participates in amino-acid biosynthesis; L-arginine biosynthesis; L-arginine from L-ornithine and carbamoyl phosphate: step 3/3. This chain is Argininosuccinate lyase, found in Xanthomonas campestris pv. campestris (strain ATCC 33913 / DSM 3586 / NCPPB 528 / LMG 568 / P 25).